The sequence spans 156 residues: Small ribosomal subunit protein uS7 (156 aa).

Belongs to the universal ribosomal protein uS7 family. Part of the 30S ribosomal subunit. Contacts proteins S9 and S11.

In terms of biological role, one of the primary rRNA binding proteins, it binds directly to 16S rRNA where it nucleates assembly of the head domain of the 30S subunit. Is located at the subunit interface close to the decoding center, probably blocks exit of the E-site tRNA. This Pseudomonas fluorescens (strain ATCC BAA-477 / NRRL B-23932 / Pf-5) protein is Small ribosomal subunit protein uS7.